The chain runs to 120 residues: ATP-dependent Clp protease adapter protein ClpS (120 aa).

Positions 9-32 (LTFNQDHPAEHEDDSSGIAVQESK) are disordered.

It belongs to the ClpS family. Binds to the N-terminal domain of the chaperone ClpA.

Functionally, involved in the modulation of the specificity of the ClpAP-mediated ATP-dependent protein degradation. This chain is ATP-dependent Clp protease adapter protein ClpS, found in Ectopseudomonas mendocina (strain ymp) (Pseudomonas mendocina).